We begin with the raw amino-acid sequence, 133 residues long: MAKEFGRPQRVAQEMQKEIAIILQREIKDPRLGMMTTVSGVEMSRDLAYAKVFVTFLNDQDEAAVKNGIKALQEASGFIRSLLGKAMRLRIVPELTFFYDNSLVEGMRMSNLVTNVVKHDEERRVNPDDSKED.

The protein belongs to the RbfA family. As to quaternary structure, monomer. Binds 30S ribosomal subunits, but not 50S ribosomal subunits or 70S ribosomes.

Its subcellular location is the cytoplasm. Its function is as follows. One of several proteins that assist in the late maturation steps of the functional core of the 30S ribosomal subunit. Associates with free 30S ribosomal subunits (but not with 30S subunits that are part of 70S ribosomes or polysomes). Required for efficient processing of 16S rRNA. May interact with the 5'-terminal helix region of 16S rRNA. This is Ribosome-binding factor A from Salmonella heidelberg (strain SL476).